A 105-amino-acid chain; its full sequence is Large ribosomal subunit protein eL42z/eL42y (105 aa).

The disordered stretch occupies residues 28 to 57 (YKKGKDSLAAQGKRRYDRKQSGYGGQTKPV).

Belongs to the eukaryotic ribosomal protein eL42 family.

This Arabidopsis thaliana (Mouse-ear cress) protein is Large ribosomal subunit protein eL42z/eL42y (RPL36AA).